The chain runs to 752 residues: Phosphoribosylformylglycinamidine synthase subunit PurL (752 aa).

H58 is an active-site residue. Positions 61 and 103 each coordinate ATP. Residue E105 participates in Mg(2+) binding. Substrate contacts are provided by residues 106 to 109 and R128; that span reads SHNH. H107 serves as the catalytic Proton acceptor. D129 is a binding site for Mg(2+). Q253 is a binding site for substrate. D281 lines the Mg(2+) pocket. Residue 325-327 participates in substrate binding; the sequence is ESQ. Positions 513 and 550 each coordinate ATP. N551 is a binding site for Mg(2+). S553 lines the substrate pocket.

Belongs to the FGAMS family. Monomer. Part of the FGAM synthase complex composed of 1 PurL, 1 PurQ and 2 PurS subunits.

It localises to the cytoplasm. The catalysed reaction is N(2)-formyl-N(1)-(5-phospho-beta-D-ribosyl)glycinamide + L-glutamine + ATP + H2O = 2-formamido-N(1)-(5-O-phospho-beta-D-ribosyl)acetamidine + L-glutamate + ADP + phosphate + H(+). The protein operates within purine metabolism; IMP biosynthesis via de novo pathway; 5-amino-1-(5-phospho-D-ribosyl)imidazole from N(2)-formyl-N(1)-(5-phospho-D-ribosyl)glycinamide: step 1/2. Functionally, part of the phosphoribosylformylglycinamidine synthase complex involved in the purines biosynthetic pathway. Catalyzes the ATP-dependent conversion of formylglycinamide ribonucleotide (FGAR) and glutamine to yield formylglycinamidine ribonucleotide (FGAM) and glutamate. The FGAM synthase complex is composed of three subunits. PurQ produces an ammonia molecule by converting glutamine to glutamate. PurL transfers the ammonia molecule to FGAR to form FGAM in an ATP-dependent manner. PurS interacts with PurQ and PurL and is thought to assist in the transfer of the ammonia molecule from PurQ to PurL. In Streptomyces coelicolor (strain ATCC BAA-471 / A3(2) / M145), this protein is Phosphoribosylformylglycinamidine synthase subunit PurL.